The primary structure comprises 527 residues: Probable bifunctional tRNA threonylcarbamoyladenosine biosynthesis protein (527 aa).

Residues 1-323 (MPDIMPDDGL…YRADEVEVAW (323 aa)) form a kae1 region. Fe cation-binding residues include His-110, His-114, and Tyr-131. Residues 131–135 (YASGA), Asp-163, Gly-176, Glu-180, and Asn-256 contribute to the L-threonylcarbamoyladenylate site. Asp-284 is a Fe cation binding site. Positions 333 to 527 (IGPHEGGVAR…HEVELRGRYL (195 aa)) constitute a Protein kinase domain. Residues 340–348 (VARGAEAVV) and Lys-357 contribute to the ATP site. The active-site Proton acceptor; for kinase activity is the Asp-444.

The protein in the N-terminal section; belongs to the KAE1 / TsaD family. This sequence in the C-terminal section; belongs to the protein kinase superfamily. Tyr protein kinase family. BUD32 subfamily. As to quaternary structure, component of the KEOPS complex that consists of Kae1, Bud32, Cgi121 and Pcc1; the whole complex dimerizes. It depends on Fe(2+) as a cofactor.

The protein localises to the cytoplasm. It carries out the reaction L-seryl-[protein] + ATP = O-phospho-L-seryl-[protein] + ADP + H(+). The catalysed reaction is L-threonyl-[protein] + ATP = O-phospho-L-threonyl-[protein] + ADP + H(+). The enzyme catalyses L-threonylcarbamoyladenylate + adenosine(37) in tRNA = N(6)-L-threonylcarbamoyladenosine(37) in tRNA + AMP + H(+). Its function is as follows. Required for the formation of a threonylcarbamoyl group on adenosine at position 37 (t(6)A37) in tRNAs that read codons beginning with adenine. Is a component of the KEOPS complex that is probably involved in the transfer of the threonylcarbamoyl moiety of threonylcarbamoyl-AMP (TC-AMP) to the N6 group of A37. The Kae1 domain likely plays a direct catalytic role in this reaction. The Bud32 domain probably displays kinase activity that regulates Kae1 function. The protein is Probable bifunctional tRNA threonylcarbamoyladenosine biosynthesis protein of Methanoculleus marisnigri (strain ATCC 35101 / DSM 1498 / JR1).